We begin with the raw amino-acid sequence, 691 residues long: DNA ligase (691 aa).

NAD(+) is bound by residues 41–45 (DAEYD), 90–91 (SL), and glutamate 130. The N6-AMP-lysine intermediate role is filled by lysine 132. NAD(+)-binding residues include arginine 153, glutamate 190, lysine 307, and lysine 331. Zn(2+) is bound by residues cysteine 425, cysteine 428, cysteine 443, and cysteine 449. The BRCT domain occupies 610–691 (APQGVLAGKT…MHTLLEGHAR (82 aa)).

The protein belongs to the NAD-dependent DNA ligase family. LigA subfamily. It depends on Mg(2+) as a cofactor. Mn(2+) is required as a cofactor.

It carries out the reaction NAD(+) + (deoxyribonucleotide)n-3'-hydroxyl + 5'-phospho-(deoxyribonucleotide)m = (deoxyribonucleotide)n+m + AMP + beta-nicotinamide D-nucleotide.. In terms of biological role, DNA ligase that catalyzes the formation of phosphodiester linkages between 5'-phosphoryl and 3'-hydroxyl groups in double-stranded DNA using NAD as a coenzyme and as the energy source for the reaction. It is essential for DNA replication and repair of damaged DNA. In Burkholderia pseudomallei (strain 668), this protein is DNA ligase.